The following is a 93-amino-acid chain: MAVLTDEQVDAALPDLNGWERADGALRRSVKFSAFLDGIDAVRRVAEHAEAKDHHPDIDIRWRTVTFALVTHSEGGITDKDVQMARDIDGILG.

Belongs to the pterin-4-alpha-carbinolamine dehydratase family.

It carries out the reaction (4aS,6R)-4a-hydroxy-L-erythro-5,6,7,8-tetrahydrobiopterin = (6R)-L-erythro-6,7-dihydrobiopterin + H2O. The protein is Putative pterin-4-alpha-carbinolamine dehydratase of Mycolicibacterium vanbaalenii (strain DSM 7251 / JCM 13017 / BCRC 16820 / KCTC 9966 / NRRL B-24157 / PYR-1) (Mycobacterium vanbaalenii).